A 152-amino-acid chain; its full sequence is Dimethylsulfoniopropionate lyase DddW (152 aa).

The Cupin type-2 domain occupies 69-124; sequence IAEFGPGHQLRPHRHTPPEFYLGLEGSGIVTIDGVPHEIRAGVALYIPGDAEHGTV. 4 residues coordinate Fe cation: H83, E87, Y89, and H121.

The protein belongs to the non-heme iron-dependent dioxygenase family. Homodimer. Requires Fe(2+) as cofactor.

It carries out the reaction S,S-dimethyl-beta-propiothetin = acrylate + dimethyl sulfide + H(+). Its function is as follows. Able to cleave dimethylsulfoniopropionate (DMSP), releasing dimethyl sulfide (DMS) and acrylate. DMS is the principal form by which sulfur is transported from oceans to the atmosphere. In Ruegeria pomeroyi (strain ATCC 700808 / DSM 15171 / DSS-3) (Silicibacter pomeroyi), this protein is Dimethylsulfoniopropionate lyase DddW.